We begin with the raw amino-acid sequence, 502 residues long: UTP--glucose-1-phosphate uridylyltransferase 2 (502 aa).

Residues Met1 to Gly20 are disordered. Polar residues predominate over residues Pro9 to Gly20. UTP-binding positions include Leu114–Gly117, Lys128, Gln191, and Gly220. Gly116–Gly117 is a substrate binding site. Substrate-binding positions include His221 and Asn249–Asp251. 2 residues coordinate UTP: Asp251 and Lys390.

The protein belongs to the UDPGP type 1 family.

It carries out the reaction alpha-D-glucose 1-phosphate + UTP + H(+) = UDP-alpha-D-glucose + diphosphate. Functionally, plays a central role as a glucosyl donor in cellular metabolic pathways. The polypeptide is UTP--glucose-1-phosphate uridylyltransferase 2 (ugpB) (Dictyostelium discoideum (Social amoeba)).